The following is a 319-amino-acid chain: Translocon-associated protein subunit alpha (319 aa).

The first 21 residues, 1–21 (MRLLPRLLLLFLLAFPAAVLL), serve as a signal peptide directing secretion. Topologically, residues 22 to 208 (RGGPGGSLAV…EREDGLDGET (187 aa)) are lumenal. Over residues 35–76 (LTEDEETVEDPIIEDEDDEAEVEEDEPTDLAEEKEEEEDVSS) the composition is skewed to acidic residues. A disordered region spans residues 35–84 (LTEDEETVEDPIIEDEDDEAEVEEDEPTDLAEEKEEEEDVSSEPEASPSA). Residues Asn-137 and Asn-192 are each glycosylated (N-linked (GlcNAc...) asparagine). The helical transmembrane segment at 209–229 (IFMYMFLAGLGLLVVVGLHQL) threads the bilayer. At 230–319 (LESRKRKRPI…SLRQLAVCGI (90 aa)) the chain is on the cytoplasmic side. Ser-248 is modified (phosphoserine). Thr-261 carries the post-translational modification Phosphothreonine.

The protein belongs to the TRAP-alpha family. As to quaternary structure, heterotetramer of TRAP-alpha, TRAP-beta, TRAP-delta and TRAP-gamma. Interacts with palmitoylated calnexin (CALX), the interaction is required for efficient folding of glycosylated proteins.

Its subcellular location is the endoplasmic reticulum membrane. In terms of biological role, TRAP proteins are part of a complex whose function is to bind calcium to the ER membrane and thereby regulate the retention of ER resident proteins. May be involved in the recycling of the translocation apparatus after completion of the translocation process or may function as a membrane-bound chaperone facilitating folding of translocated proteins. This Rattus norvegicus (Rat) protein is Translocon-associated protein subunit alpha (Ssr1).